We begin with the raw amino-acid sequence, 71 residues long: Beta-defensin 9 (71 aa).

The signal sequence occupies residues 1-23 (MRTLCSLLLICCLLFSYDTPVVG). Disulfide bonds link cysteine 37/cysteine 66, cysteine 44/cysteine 59, and cysteine 49/cysteine 67.

Belongs to the beta-defensin family.

The protein resides in the secreted. In terms of biological role, has antibacterial activity. The polypeptide is Beta-defensin 9 (Defb9) (Rattus norvegicus (Rat)).